A 65-amino-acid polypeptide reads, in one-letter code: Large ribosomal subunit protein bL35 (65 aa).

Over residues 1–16 (MPKMKTKSGAKKRFRV) the composition is skewed to basic residues. Residues 1-25 (MPKMKTKSGAKKRFRVRPGGTVKRG) are disordered.

It belongs to the bacterial ribosomal protein bL35 family.

The chain is Large ribosomal subunit protein bL35 from Herminiimonas arsenicoxydans.